A 173-amino-acid chain; its full sequence is MAGALRRTMVYLGLAESDDEYISDETPRPRDTPQSAGGSSAAVSESGSTSVARRSPEYRAPVTPIKRAPSSREDENELRTITTVHPRSYNDAKSIGEAFRDGTPVIMNVSDMGEAEAKRLVDFAAGLVFALHGSIERVTAKVFLLTPSFVEVRDQGHSDDIDEEPASLEQVEG.

A disordered region spans residues 17 to 85; the sequence is SDDEYISDET…NELRTITTVH (69 aa). Positions 35-52 are enriched in low complexity; the sequence is SAGGSSAAVSESGSTSVA.

This sequence belongs to the SepF family. As to quaternary structure, homodimer. Interacts with FtsZ.

It is found in the cytoplasm. Cell division protein that is part of the divisome complex and is recruited early to the Z-ring. Probably stimulates Z-ring formation, perhaps through the cross-linking of FtsZ protofilaments. Its function overlaps with FtsA. This is Cell division protein SepF from Kocuria rhizophila (strain ATCC 9341 / DSM 348 / NBRC 103217 / DC2201).